The sequence spans 237 residues: ATP synthase subunit 4, mitochondrial (237 aa).

Residues 1–30 (MFRALTLKASARPVVAGLCSRQAPIAAVRY) constitute a mitochondrion transit peptide.

This sequence belongs to the eukaryotic ATPase B chain family.

The protein localises to the mitochondrion. Its subcellular location is the mitochondrion inner membrane. Mitochondrial membrane ATP synthase (F(1)F(0) ATP synthase or Complex V) produces ATP from ADP in the presence of a proton gradient across the membrane which is generated by electron transport complexes of the respiratory chain. F-type ATPases consist of two structural domains, F(1) - containing the extramembraneous catalytic core, and F(0) - containing the membrane proton channel, linked together by a central stalk and a peripheral stalk. During catalysis, ATP synthesis in the catalytic domain of F(1) is coupled via a rotary mechanism of the central stalk subunits to proton translocation. Part of the complex F(0) domain and the peripheric stalk, which acts as a stator to hold the catalytic alpha(3)beta(3) subcomplex and subunit a/ATP6 static relative to the rotary elements. In Kluyveromyces lactis (strain ATCC 8585 / CBS 2359 / DSM 70799 / NBRC 1267 / NRRL Y-1140 / WM37) (Yeast), this protein is ATP synthase subunit 4, mitochondrial (ATP4).